The sequence spans 167 residues: Multifunctional Ser/Thr-tRNA deacylase ProXp-y (167 aa).

The protein resides in the cytoplasm. It carries out the reaction L-seryl-tRNA(Lys) + H2O = tRNA(Lys) + L-serine. The catalysed reaction is L-threonyl-tRNA(Lys) + H2O = tRNA(Lys) + L-threonine. The enzyme catalyses L-homoseryl-tRNA(Lys) + H2O = tRNA(Lys) + L-homoserine + H(+). It catalyses the reaction L-seryl-tRNA(Ala) + H2O = tRNA(Ala) + L-serine. It carries out the reaction L-homoseryl-tRNA(Ser) + H2O = tRNA(Ser) + L-homoserine + H(+). The catalysed reaction is L-seryl-tRNA(Thr) + H2O = tRNA(Thr) + L-serine. The enzyme catalyses L-threonyl-tRNA(Ile) + H2O = tRNA(Ile) + L-threonine. It catalyses the reaction L-threonyl-tRNA(Val) + H2O = tRNA(Val) + L-threonine. It carries out the reaction L-threonyl-tRNA(Ser) + H2O = tRNA(Ser) + L-threonine. An aminoacyl-tRNA editing enzyme that deacylates Ser-tRNA and/or Thr-tRNA mischarged by lysyl-tRNA synthetase (LysRS), threonyl-tRNA synthetase (ThrRS), seryl-tRNA synthetase (SerRS), alanyl-tRNA synthetase (AlaRS), valyl-tRNA synthetase (ValRS) and isoleucyl-tRNA synthetase (IleRS) in vitro. Also deacylates mischarged Hse-tRNA(Lys) and Hse-tRNA(Ser), and cognate Ser-tRNA(Ser) and Thr-tRNA(Thr) in vitro. The presence of cognate ThrRS abolishes the Thr-tRNA(Thr) deacylase activity, hence this activity is not applicable physiologically. Not able to remove the amino acid moiety from cognate Val-tRNA(Val), Ile-tRNA(Ile), Lys-tRNA(Lys), Ala-tRNA(Ala) or Pro-tRNA(Pro), or from incorrectly charged Ala-tRNA(Pro), Cys-tRNA(Pro) or Leu-tRNA(Pro) in vitro. May be required in vivo to prevent mistranslation and to maintain growth when the error prone stress-inducible lysyl-tRNA synthetase (LysU) is expressed under environmental pressure. The protein is Multifunctional Ser/Thr-tRNA deacylase ProXp-y of Escherichia coli O157:H7.